The sequence spans 189 residues: Small ribosomal subunit protein uS5 (189 aa).

The S5 DRBM domain occupies 23 to 86; that stretch reads FIDKLVHINR…ESAKREMIYV (64 aa).

This sequence belongs to the universal ribosomal protein uS5 family. As to quaternary structure, part of the 30S ribosomal subunit. Contacts proteins S4 and S8.

In terms of biological role, with S4 and S12 plays an important role in translational accuracy. Located at the back of the 30S subunit body where it stabilizes the conformation of the head with respect to the body. In Bartonella bacilliformis (strain ATCC 35685 / KC583 / Herrer 020/F12,63), this protein is Small ribosomal subunit protein uS5.